We begin with the raw amino-acid sequence, 368 residues long: Decarboxylase yanB (368 aa).

Positions 7, 9, and 159 each coordinate Zn(2+). N169 carries an N-linked (GlcNAc...) asparagine glycan. Residue D283 coordinates Zn(2+). The chain crosses the membrane as a helical span at residues 339–359 (WGAFSACLLLPVGLSALYSVL).

The protein belongs to the metallo-dependent hydrolases superfamily. ACMSD family.

It localises to the membrane. It carries out the reaction 6-methylsalicylate + H(+) = 3-methylphenol + CO2. It functions in the pathway secondary metabolite biosynthesis; terpenoid biosynthesis. Decarboxylase; part of the gene cluster that mediates the biosynthesis of yanuthone D, a fungal isoprenoid epoxycyclohexenone that acts as an antibiotic against fungi and bacteria. The first step of the pathway is the synthesis of 6-methylsalicylic acid (6-MSA) by the polyketide synthase yanA. 6-MSA is then converted to m-cresol by the decarboxylase yanB. The cytochrome P450 monooxygenase yanC then catalyzes the oxidation of m-cresol to toluquinol. Epoxidation of toluquinol is then performed by the short chain dehydrogenase yanD, with the help of yanE, and a further prenylation by yanG leads to 7-deacetoxyyanuthone A. The next step is the hydroxylation of C-22 of 7-deacetoxyyanuthone A by the cytochrome P450 monooxygenase yanH to yield 22-deacetylyanuthone A. O-Mevalon transferase yanI then attaches mevalon to the hydroxyl group of 22-deacetylyanuthone A to produce yanuthone E. Finally, the FAD-dependent monooxygenase yanF oxidizes the hydroxyl group at C15 of yanuthone E to form yanuthone D. Furthermore, several branching points in the pathway lead to the production of yanuthones F and G from 7-deacetoxyyanuthone A; yanuthones H and I from 22-deacetylyanuthone A; and yanuthone J from yanuthone E. In Aspergillus niger (strain ATCC 1015 / CBS 113.46 / FGSC A1144 / LSHB Ac4 / NCTC 3858a / NRRL 328 / USDA 3528.7), this protein is Decarboxylase yanB.